The primary structure comprises 399 residues: Telomeric repeat-binding factor 2-interacting protein 1 (399 aa).

Ala-2 carries the post-translational modification N-acetylalanine. Phosphoserine is present on residues Ser-36 and Ser-43. Residues 78–101 enclose the BRCT domain; it reads FISTQYILDCVERNERLELEAYRL. A disordered region spans residues 104 to 132; it reads ASAADTGSEAKPGALAEGAAEPEPQRHAG. Residues 112-125 show a composition bias toward low complexity; the sequence is EAKPGALAEGAAEP. Residue Lys-114 forms a Glycyl lysine isopeptide (Lys-Gly) (interchain with G-Cter in SUMO2) linkage. The Myb-like domain occupies 128 to 188; sequence QRHAGRIAFT…SLKDRYLKHL (61 aa). A phosphoserine mark is found at Ser-154 and Ser-156. Lys-194 participates in a covalent cross-link: Glycyl lysine isopeptide (Lys-Gly) (interchain with G-Cter in SUMO2). Disordered stretches follow at residues 196-244 and 264-311; these read LLGD…EEIQ and VVVD…QPEV. Ser-203 and Ser-206 each carry phosphoserine. Residues Lys-208, Lys-212, and Lys-240 each participate in a glycyl lysine isopeptide (Lys-Gly) (interchain with G-Cter in SUMO2) cross-link. Over residues 280-304 the composition is skewed to acidic residues; sequence CDDDPPTPEEDSETQPDEEEEEEEE. Residue Lys-372 forms a Glycyl lysine isopeptide (Lys-Gly) (interchain with G-Cter in SUMO2) linkage. The Nuclear localization signal motif lies at 383–399; sequence KKFGAQNVARRIEFRKK.

It belongs to the RAP1 family. In terms of assembly, associates with the I-kappa-B-kinase (IKK) core complex, composed of CHUK, IKBKB and IKBKG. Homodimer. Component of the shelterin complex (telosome) composed of TERF1, TERF2, TINF2, TERF2IP ACD and POT1. Interacts with TERF2; the interaction is direct. Does not interact with TERF1. Interacts with SLX4/BTBD12. As to expression, ubiquitous. Highly expressed.

It is found in the nucleus. The protein localises to the cytoplasm. It localises to the chromosome. Its subcellular location is the telomere. Its function is as follows. Acts both as a regulator of telomere function and as a transcription regulator. Involved in the regulation of telomere length and protection as a component of the shelterin complex (telosome). In contrast to other components of the shelterin complex, it is dispensible for telomere capping and does not participate in the protection of telomeres against non-homologous end-joining (NHEJ)-mediated repair. Instead, it is required to negatively regulate telomere recombination and is essential for repressing homology-directed repair (HDR), which can affect telomere length. Does not bind DNA directly: recruited to telomeric double-stranded 5'-TTAGGG-3' repeats via its interaction with TERF2. Independently of its function in telomeres, also acts as a transcription regulator: recruited to extratelomeric 5'-TTAGGG-3' sites via its association with TERF2 or other factors, and regulates gene expression. When cytoplasmic, associates with the I-kappa-B-kinase (IKK) complex and acts as a regulator of the NF-kappa-B signaling by promoting IKK-mediated phosphorylation of RELA/p65, leading to activate expression of NF-kappa-B target genes. This Homo sapiens (Human) protein is Telomeric repeat-binding factor 2-interacting protein 1 (TERF2IP).